Here is a 411-residue protein sequence, read N- to C-terminus: Class E basic helix-loop-helix protein 40 (411 aa).

Residues 1-20 are disordered; it reads MERIPSAQPPPTCLPKAPGL. Positions 1-139 are essential for interaction with BMAL1, E-box binding and repressor activity against the CLOCK-BMAL1 heterodimer; that stretch reads MERIPSAQPP…LSGRNLEAGQ (139 aa). The 56-residue stretch at 52 to 107 folds into the bHLH domain; it reads TYKLPHRLIEKKRRDRINECIAQLKDLLPEHLKLTTLGHLEKAVVLELTLKHVKAL. The tract at residues 75–79 is necessary for interaction with RXRA and repressor activity against RXRA; it reads LKDLL. Residues 142-175 enclose the Orange domain; it reads FCSGFQTCAREVLQYLAKHENTRDLKSSQLVTHL. Lys159 participates in a covalent cross-link: Glycyl lysine isopeptide (Lys-Gly) (interchain with G-Cter in SUMO1, SUMO2 and SUMO3). Lys167 is covalently cross-linked (Glycyl lysine isopeptide (Lys-Gly) (interchain with G-Cter in SUMO2)). The segment at 227–294 is disordered; the sequence is FAPSGGEQSG…PPTKKSRMQL (68 aa). Ser235 carries the post-translational modification Phosphoserine. Over residues 248-271 the composition is skewed to basic and acidic residues; that stretch reads ELEKGDLRSEQPYFKSDHGRRFAV. Lys279 participates in a covalent cross-link: Glycyl lysine isopeptide (Lys-Gly) (interchain with G-Cter in SUMO1); alternate. Residue Lys279 forms a Glycyl lysine isopeptide (Lys-Gly) (interchain with G-Cter in SUMO1, SUMO2 and SUMO3); alternate linkage. Lys279 participates in a covalent cross-link: Glycyl lysine isopeptide (Lys-Gly) (interchain with G-Cter in SUMO2); alternate. A Glycyl lysine isopeptide (Lys-Gly) (interchain with G-Cter in SUMO2) cross-link involves residue Lys288. Ser383 is subject to Phosphoserine.

As to quaternary structure, homodimer. Heterodimer with BHLHE41/DEC2. Interacts with ubiquitin-conjugating enzyme UBE2I/UBC9. Interacts with HDAC1, SUMO1, RXRA and BMAL1. Interacts with TCF3/E47. Ubiquitinated; which may lead to proteasomal degradation. Post-translationally, sumoylation inhibits its ubiquitination and promotes its negative regulation of the CLOCK-BMAL1 heterodimer transcriptional activator activity.

The protein localises to the cytoplasm. It is found in the nucleus. Transcriptional repressor involved in the regulation of the circadian rhythm by negatively regulating the activity of the clock genes and clock-controlled genes. Acts as the negative limb of a novel autoregulatory feedback loop (DEC loop) which differs from the one formed by the PER and CRY transcriptional repressors (PER/CRY loop). Both these loops are interlocked as it represses the expression of PER1/2 and in turn is repressed by PER1/2 and CRY1/2. Represses the activity of the circadian transcriptional activator: CLOCK-BMAL1|BMAL2 heterodimer by competing for the binding to E-box elements (5'-CACGTG-3') found within the promoters of its target genes. Negatively regulates its own expression and the expression of DBP and BHLHE41/DEC2. Acts as a corepressor of RXR and the RXR-LXR heterodimers and represses the ligand-induced RXRA and NR1H3/LXRA transactivation activity. May function as a transcriptional factor for neuronal differentiation. Represses the transcription of NR0B2 and attentuates the transactivation of NR0B2 by the CLOCK-BMAL1 complex. Drives the circadian rhythm of blood pressure through transcriptional repression of ATP1B1 in the cardiovascular system. The protein is Class E basic helix-loop-helix protein 40 (Bhlhe40) of Mus musculus (Mouse).